Reading from the N-terminus, the 392-residue chain is 5-azacytidine-induced protein 2 (392 aa).

The tract at residues 1–197 is homodimerization; it reads MDALVEDDIC…IELQKAKQTD (197 aa). Coiled coils occupy residues 40-76 and 102-196; these read ALVT…LIAR and DRDN…AKQT. Residues 216–257 are interaction with TBK1 and IKBKE; it reads SDNMQHAYWELKREMSNLHLVTQVQAELLRKLKTSTAIKKAC. Residues Ser318 and Ser353 each carry the phosphoserine modification.

Homodimer. Interacts with IKBKE. Interacts with TBK1. Interacts with TICAM1. Interacts with TAX1BP1. Interacts with CALCOCO2. As to quaternary structure, (Microbial infection) Interacts with vaccinia virus protein C6. Post-translationally, ubiquitinated via 'Lys-48'-linked polyubiquitination by TRIM38, leading to its degradation. Widely expressed. Abundant expression seen in the pancreas and testis.

Its subcellular location is the cytoplasm. Its function is as follows. Adapter protein which binds TBK1 and IKBKE playing a role in antiviral innate immunity. Activates serine/threonine-protein kinase TBK1 and facilitates its oligomerization. Enhances the phosphorylation of NF-kappa-B p65 subunit RELA by TBK1. Promotes TBK1-induced as well as TNF-alpha or PMA-induced activation of NF-kappa-B. Participates in IFNB promoter activation via TICAM1. This chain is 5-azacytidine-induced protein 2 (AZI2), found in Homo sapiens (Human).